The primary structure comprises 124 residues: Large ribosomal subunit protein bL12 (124 aa).

Belongs to the bacterial ribosomal protein bL12 family. Homodimer. Part of the ribosomal stalk of the 50S ribosomal subunit. Forms a multimeric L10(L12)X complex, where L10 forms an elongated spine to which 2 to 4 L12 dimers bind in a sequential fashion. Binds GTP-bound translation factors.

Forms part of the ribosomal stalk which helps the ribosome interact with GTP-bound translation factors. Is thus essential for accurate translation. The polypeptide is Large ribosomal subunit protein bL12 (Cereibacter sphaeroides (strain ATCC 17025 / ATH 2.4.3) (Rhodobacter sphaeroides)).